A 525-amino-acid polypeptide reads, in one-letter code: Polyamine aminopropyltransferase 1 (525 aa).

6 consecutive transmembrane segments (helical) span residues 21–41 (ALLV…ELIA), 53–73 (ILQF…GSWV), 89–109 (LELL…LLFA), 117–137 (LVLY…IPLV), 155–175 (VLTF…LVLA), and 180–200 (LVRT…WTLW). Positions 220–464 (AGMVGAALLA…GEWGFILAAP (245 aa)) constitute a PABS domain. Positions 222-471 (MVGAALLAGF…AAPGRADFRP (250 aa)) are spermidine synthase. Residue glutamine 259 coordinates S-methyl-5'-thioadenosine. 2 residues coordinate spermidine: histidine 289 and aspartate 313. Residues aspartate 333 and 367-368 (DA) contribute to the S-methyl-5'-thioadenosine site. Aspartate 385 functions as the Proton acceptor in the catalytic mechanism.

The protein belongs to the spermidine/spermine synthase family. In terms of assembly, homodimer or homotetramer.

It is found in the cell membrane. The enzyme catalyses S-adenosyl 3-(methylsulfanyl)propylamine + putrescine = S-methyl-5'-thioadenosine + spermidine + H(+). It participates in amine and polyamine biosynthesis; spermidine biosynthesis; spermidine from putrescine: step 1/1. Catalyzes the irreversible transfer of a propylamine group from the amino donor S-adenosylmethioninamine (decarboxy-AdoMet) to putrescine (1,4-diaminobutane) to yield spermidine. The protein is Polyamine aminopropyltransferase 1 of Ralstonia nicotianae (strain ATCC BAA-1114 / GMI1000) (Ralstonia solanacearum).